A 456-amino-acid chain; its full sequence is Bifunctional protein GlmU (456 aa).

The pyrophosphorylase stretch occupies residues 1-229; sequence MLNNAMSVVI…LSEVEGVNNR (229 aa). Residues 11-14, lysine 25, glutamine 76, 81-82, 103-105, glycine 140, glutamate 154, asparagine 169, and asparagine 227 each bind UDP-N-acetyl-alpha-D-glucosamine; these read LAAG, GT, and YGD. Residue aspartate 105 coordinates Mg(2+). Residue asparagine 227 coordinates Mg(2+). Positions 230–250 are linker; the sequence is LQLSRLERVYQSEQAEKLLLA. Residues 251-456 are N-acetyltransferase; it reads GVMLRDPARF…EGWRRPVKKK (206 aa). Positions 333 and 351 each coordinate UDP-N-acetyl-alpha-D-glucosamine. The active-site Proton acceptor is the histidine 363. Residues tyrosine 366 and asparagine 377 each contribute to the UDP-N-acetyl-alpha-D-glucosamine site. Acetyl-CoA contacts are provided by residues alanine 380, 386-387, serine 405, alanine 423, and arginine 440; that span reads NY.

It in the N-terminal section; belongs to the N-acetylglucosamine-1-phosphate uridyltransferase family. The protein in the C-terminal section; belongs to the transferase hexapeptide repeat family. As to quaternary structure, homotrimer. The cofactor is Mg(2+).

It is found in the cytoplasm. The catalysed reaction is alpha-D-glucosamine 1-phosphate + acetyl-CoA = N-acetyl-alpha-D-glucosamine 1-phosphate + CoA + H(+). It catalyses the reaction N-acetyl-alpha-D-glucosamine 1-phosphate + UTP + H(+) = UDP-N-acetyl-alpha-D-glucosamine + diphosphate. It functions in the pathway nucleotide-sugar biosynthesis; UDP-N-acetyl-alpha-D-glucosamine biosynthesis; N-acetyl-alpha-D-glucosamine 1-phosphate from alpha-D-glucosamine 6-phosphate (route II): step 2/2. It participates in nucleotide-sugar biosynthesis; UDP-N-acetyl-alpha-D-glucosamine biosynthesis; UDP-N-acetyl-alpha-D-glucosamine from N-acetyl-alpha-D-glucosamine 1-phosphate: step 1/1. The protein operates within bacterial outer membrane biogenesis; LPS lipid A biosynthesis. Its function is as follows. Catalyzes the last two sequential reactions in the de novo biosynthetic pathway for UDP-N-acetylglucosamine (UDP-GlcNAc). The C-terminal domain catalyzes the transfer of acetyl group from acetyl coenzyme A to glucosamine-1-phosphate (GlcN-1-P) to produce N-acetylglucosamine-1-phosphate (GlcNAc-1-P), which is converted into UDP-GlcNAc by the transfer of uridine 5-monophosphate (from uridine 5-triphosphate), a reaction catalyzed by the N-terminal domain. The protein is Bifunctional protein GlmU of Shigella dysenteriae serotype 1 (strain Sd197).